A 167-amino-acid chain; its full sequence is Ribosome maturation factor RimP (167 aa).

The protein belongs to the RimP family.

The protein localises to the cytoplasm. Required for maturation of 30S ribosomal subunits. In Streptomyces griseus subsp. griseus (strain JCM 4626 / CBS 651.72 / NBRC 13350 / KCC S-0626 / ISP 5235), this protein is Ribosome maturation factor RimP.